Here is a 238-residue protein sequence, read N- to C-terminus: Cysteine-rich venom protein pseudechetoxin-like (238 aa).

The N-terminal stretch at M1–G19 is a signal peptide. Positions T20–S28 are excised as a propeptide. In terms of domain architecture, SCP spans V38–Y164. 8 disulfides stabilise this stretch: C75/C153, C92/C165, C148/C162, C184/C191, C187/C196, C200/C233, C209/C227, and C218/C231. A ShKT domain is found at C200–C233.

Belongs to the CRISP family. As to expression, expressed by the venom gland.

It is found in the secreted. Functionally, blocks olfactory (CNGA2) and retinal (CNGA1) CNG channel currents. Does not affect neither depolarization- nor caffeine-induced contraction of smooth muscle. The polypeptide is Cysteine-rich venom protein pseudechetoxin-like (Oxyuranus scutellatus scutellatus (Australian taipan)).